A 214-amino-acid polypeptide reads, in one-letter code: dITP/XTP pyrophosphatase (214 aa).

16 to 21 (THNPGK) lines the substrate pocket. Residues aspartate 48 and aspartate 77 each coordinate Mg(2+). The active-site Proton acceptor is the aspartate 77. Residues serine 78, 163–166 (FGYD), lysine 186, and 198–199 (HR) contribute to the substrate site.

The protein belongs to the HAM1 NTPase family. In terms of assembly, homodimer. Requires Mg(2+) as cofactor.

It carries out the reaction XTP + H2O = XMP + diphosphate + H(+). The catalysed reaction is dITP + H2O = dIMP + diphosphate + H(+). The enzyme catalyses ITP + H2O = IMP + diphosphate + H(+). Functionally, pyrophosphatase that catalyzes the hydrolysis of nucleoside triphosphates to their monophosphate derivatives, with a high preference for the non-canonical purine nucleotides XTP (xanthosine triphosphate), dITP (deoxyinosine triphosphate) and ITP. Seems to function as a house-cleaning enzyme that removes non-canonical purine nucleotides from the nucleotide pool, thus preventing their incorporation into DNA/RNA and avoiding chromosomal lesions. The sequence is that of dITP/XTP pyrophosphatase from Bradyrhizobium sp. (strain BTAi1 / ATCC BAA-1182).